Reading from the N-terminus, the 127-residue chain is MSDNEDNFDGDDFDDVEEDEGLDDLENAEEEGQVNVEILPSGERPQANQKRITTPYMTKYERARVLGTRALQIAMCAPVMVELEGETDPLLIAMKELKARKIPIIIRRYLPDGSYEDWGVDELIITD.

Residues 1-32 (MSDNEDNFDGDDFDDVEEDEGLDDLENAEEEG) show a composition bias toward acidic residues. The disordered stretch occupies residues 1–52 (MSDNEDNFDGDDFDDVEEDEGLDDLENAEEEGQVNVEILPSGERPQANQKRI). At S2 the chain carries N-acetylserine. Position 2 is a phosphoserine; by CK2 (S2).

The protein belongs to the archaeal Rpo6/eukaryotic RPB6 RNA polymerase subunit family. As to quaternary structure, component of the RNA polymerase I (Pol I), RNA polymerase II (Pol II) and RNA polymerase III (Pol III) complexes consisting of at least 13, 12 and 17 subunits, respectively. Pol I complex consists of a ten-subunit catalytic core composed of POLR1A/RPA1, POLR1B/RPA2, POLR1C/RPAC1, POLR1D/RPAC2, POLR1H/RPA12, POLR2E/RPABC1, POLR2F/RPABC2, POLR2H/RPABC3, POLR2K/RPABC4 and POLR2L/RPABC5; a mobile stalk subunit POLR1F/RPA43 protruding from the core and additional subunits homologous to general transcription factors POLR1E/RPA49 and POLR1G/RPA34. Part of Pol I pre-initiation complex (PIC), in which Pol I core assembles with RRN3 and promoter-bound UTBF and SL1/TIF-IB complex. Pol II complex contains a ten-subunit catalytic core composed of POLR2A/RPB1, POLR2B/RPB2, POLR2C/RPB3, POLR2I/RPB9, POLR2J/RPB11, POLR2E/RPABC1, POLR2F/RPABC2, POLR2H/RPABC3, POLR2K/RPABC4 and POLR2L/RPABC5 and a mobile stalk composed of two subunits POLR2D/RPB4 and POLR2G/RPB7. Part of Pol II(G) complex, in which Pol II core associates with an additional subunit POLR2M; unlike conventional Pol II, Pol II(G) functions as a transcriptional repressor. Part of TBP-based Pol II pre-initiation complex (PIC), in which Pol II core assembles with general transcription factors and other specific initiation factors including GTF2E1, GTF2E2, GTF2F1, GTF2F2, TCEA1, ERCC2, ERCC3, GTF2H2, GTF2H3, GTF2H4, GTF2H5, GTF2A1, GTF2A2, GTF2B and TBP; this large multi-subunit PIC complex mediates DNA unwinding and targets Pol II core to the transcription start site where the first phosphodiester bond forms. Pol III complex consists of a ten-subunit catalytic core composed of POLR3A/RPC1, POLR3B/RPC2, POLR1C/RPAC1, POLR1D/RPAC2, POLR3K/RPC10, POLR2E/RPABC1, POLR2F/RPABC2, POLR2H/RPABC3, POLR2K/RPABC4 and POLR2L/RPABC5; a mobile stalk composed of two subunits POLR3H/RPC8 and CRCP/RPC9, protruding from the core and functioning primarily in transcription initiation; and additional subunits homologous to general transcription factors of the RNA polymerase II machinery, POLR3C/RPC3-POLR3F/RPC6-POLR3G/RPC7 heterotrimer required for transcription initiation and POLR3D/RPC4-POLR3E/RPC5 heterodimer involved in both transcription initiation and termination.

Its subcellular location is the nucleus. The protein localises to the nucleolus. Functionally, DNA-dependent RNA polymerase catalyzes the transcription of DNA into RNA using the four ribonucleoside triphosphates as substrates. Common component of RNA polymerases I, II, and III which synthesize ribosomal RNA precursors, mRNA precursors and many functional non-coding RNAs, and small RNAs, such as 5S rRNA and tRNAs, respectively. Pol II is the central component of the basal RNA polymerase II transcription machinery. Pols are composed of mobile elements that move relative to each other. In Pol II, POLR2F/RPABC2 is part of the clamp element and together with parts of POLR2A/RPB1 and POLR2B/RPB2 forms a pocket to which the POLR2D/RPB4-POLR2G/RPB7 subcomplex binds. In Bos taurus (Bovine), this protein is DNA-directed RNA polymerases I, II, and III subunit RPABC2 (POLR2F).